Consider the following 644-residue polypeptide: Exoribonuclease 2 (644 aa).

The 328-residue stretch at 189–516 (REDLTALNFV…NHRLLKAIIT (328 aa)) folds into the RNB domain. Residues 561 to 643 (DTRFPAEIID…ETRNVVARPV (83 aa)) enclose the S1 motif domain.

It belongs to the RNR ribonuclease family. RNase II subfamily.

It is found in the cytoplasm. The enzyme catalyses Exonucleolytic cleavage in the 3'- to 5'-direction to yield nucleoside 5'-phosphates.. Involved in mRNA degradation. Hydrolyzes single-stranded polyribonucleotides processively in the 3' to 5' direction. This chain is Exoribonuclease 2, found in Yersinia enterocolitica serotype O:8 / biotype 1B (strain NCTC 13174 / 8081).